A 150-amino-acid chain; its full sequence is Large ribosomal subunit protein uL13 (150 aa).

It belongs to the universal ribosomal protein uL13 family. As to quaternary structure, part of the 50S ribosomal subunit.

Its function is as follows. This protein is one of the early assembly proteins of the 50S ribosomal subunit, although it is not seen to bind rRNA by itself. It is important during the early stages of 50S assembly. The protein is Large ribosomal subunit protein uL13 of Chlamydia caviae (strain ATCC VR-813 / DSM 19441 / 03DC25 / GPIC) (Chlamydophila caviae).